The primary structure comprises 221 residues: Endo-1,4-beta-xylanase A (221 aa).

A signal peptide spans 1–16 (MKFFATIAALVVGAVA). The GH11 domain occupies 29–221 (PMLIERAGPG…GTGSASVTVS (193 aa)). Glu-114 functions as the Nucleophile in the catalytic mechanism. The Proton donor role is filled by Glu-208.

Belongs to the glycosyl hydrolase 11 (cellulase G) family.

It localises to the secreted. The catalysed reaction is Endohydrolysis of (1-&gt;4)-beta-D-xylosidic linkages in xylans.. It functions in the pathway glycan degradation; xylan degradation. Endo-1,4-beta-xylanase involved in the hydrolysis of xylan, a major structural heterogeneous polysaccharide found in plant biomass representing the second most abundant polysaccharide in the biosphere, after cellulose. The sequence is that of Endo-1,4-beta-xylanase A (xynA) from Aureobasidium pullulans (Black yeast).